A 356-amino-acid polypeptide reads, in one-letter code: Histidinol-phosphate aminotransferase (356 aa).

Lysine 214 is subject to N6-(pyridoxal phosphate)lysine.

Belongs to the class-II pyridoxal-phosphate-dependent aminotransferase family. Histidinol-phosphate aminotransferase subfamily. Homodimer. The cofactor is pyridoxal 5'-phosphate.

The enzyme catalyses L-histidinol phosphate + 2-oxoglutarate = 3-(imidazol-4-yl)-2-oxopropyl phosphate + L-glutamate. The protein operates within amino-acid biosynthesis; L-histidine biosynthesis; L-histidine from 5-phospho-alpha-D-ribose 1-diphosphate: step 7/9. The chain is Histidinol-phosphate aminotransferase from Shigella sonnei (strain Ss046).